Consider the following 146-residue polypeptide: Hemoglobin subunit beta (146 aa).

Val1 carries the post-translational modification N-acetylvaline. Residues 2-146 (HLTGEEKSAV…VANALAHKYH (145 aa)) enclose the Globin domain. Thr12 carries the post-translational modification Phosphothreonine. Ser44 is subject to Phosphoserine. Lys59 bears the N6-acetyllysine mark. His63 lines the heme b pocket. Position 82 is an N6-acetyllysine (Lys82). Residue His92 coordinates heme b. Cys93 is modified (S-nitrosocysteine). Lys144 carries the post-translational modification N6-acetyllysine.

This sequence belongs to the globin family. Heterotetramer of two alpha chains and two beta chains. As to expression, red blood cells.

Involved in oxygen transport from the lung to the various peripheral tissues. This Loris tardigradus (Slender loris) protein is Hemoglobin subunit beta (HBB).